Reading from the N-terminus, the 451-residue chain is AAA-ATPase At3g28570, mitochondrial (451 aa).

The N-terminal 48 residues, 1 to 48 (MFAENLTRIGSNVAGLFFVWSTLKRYFPRQIQQLLFNAIQRIPIFKRL), are a transit peptide targeting the mitochondrion. An ATP-binding site is contributed by 243–250 (GPPGTGKS).

It belongs to the AAA ATPase family. BCS1 subfamily. It depends on Mg(2+) as a cofactor.

The protein resides in the mitochondrion. The catalysed reaction is ATP + H2O = ADP + phosphate + H(+). This is AAA-ATPase At3g28570, mitochondrial from Arabidopsis thaliana (Mouse-ear cress).